The following is a 248-amino-acid chain: Probable S-methyl-5'-thioinosine phosphorylase (248 aa).

Phosphate contacts are provided by residues threonine 12 and 54-55; that span reads RH. Position 187 (methionine 187) interacts with substrate. Phosphate is bound at residue threonine 188. 211-213 serves as a coordination point for substrate; the sequence is NWA.

The protein belongs to the PNP/MTAP phosphorylase family. MTAP subfamily. Homotrimer.

It catalyses the reaction S-methyl-5'-thioinosine + phosphate = 5-(methylsulfanyl)-alpha-D-ribose 1-phosphate + hypoxanthine. Its pathway is purine metabolism; purine nucleoside salvage. In terms of biological role, catalyzes the reversible phosphorylation of S-methyl-5'-thioinosine (MTI) to hypoxanthine and 5-methylthioribose-1-phosphate. Involved in the breakdown of S-methyl-5'-thioadenosine (MTA), a major by-product of polyamine biosynthesis. Catabolism of (MTA) occurs via deamination to MTI and phosphorolysis to hypoxanthine. The protein is Probable S-methyl-5'-thioinosine phosphorylase of Xylella fastidiosa (strain Temecula1 / ATCC 700964).